A 264-amino-acid chain; its full sequence is JmjC domain-containing protein 8 (264 aa).

A signal peptide spans methionine 1–alanine 23. Asparagine 130, asparagine 140, and asparagine 209 each carry an N-linked (GlcNAc...) asparagine glycan. The region spanning aspartate 131 to glycine 264 is the JmjC domain.

As to quaternary structure, oligomer. Dimer. Interacts with PKM; regulates angiogenesis and metabolism. In terms of processing, N-glycosylated.

It localises to the endoplasmic reticulum lumen. It is found in the cytoplasm. Functionally, functions as a positive regulator of TNF-induced NF-kappa-B signaling. Regulates angiogenesis and cellular metabolism through interaction with PKM. The sequence is that of JmjC domain-containing protein 8 from Homo sapiens (Human).